The following is a 400-amino-acid chain: Argininosuccinate synthase (400 aa).

8–16 (AYSGGLDTS) lines the ATP pocket. 2 residues coordinate L-citrulline: Y86 and S91. An ATP-binding site is contributed by G116. 3 residues coordinate L-aspartate: T118, N122, and D123. Residue N122 coordinates L-citrulline. L-citrulline-binding residues include R126, S175, S184, E260, and Y272.

It belongs to the argininosuccinate synthase family. Type 1 subfamily. As to quaternary structure, homotetramer.

It localises to the cytoplasm. The catalysed reaction is L-citrulline + L-aspartate + ATP = 2-(N(omega)-L-arginino)succinate + AMP + diphosphate + H(+). Its pathway is amino-acid biosynthesis; L-arginine biosynthesis; L-arginine from L-ornithine and carbamoyl phosphate: step 2/3. The polypeptide is Argininosuccinate synthase (Clostridium acetobutylicum (strain ATCC 824 / DSM 792 / JCM 1419 / IAM 19013 / LMG 5710 / NBRC 13948 / NRRL B-527 / VKM B-1787 / 2291 / W)).